A 140-amino-acid polypeptide reads, in one-letter code: Nucleoside diphosphate kinase (140 aa).

The ATP site is built by lysine 11, phenylalanine 59, arginine 87, threonine 93, arginine 104, and asparagine 114. Catalysis depends on histidine 117, which acts as the Pros-phosphohistidine intermediate.

It belongs to the NDK family. As to quaternary structure, homotetramer. Mg(2+) is required as a cofactor.

It localises to the cytoplasm. The catalysed reaction is a 2'-deoxyribonucleoside 5'-diphosphate + ATP = a 2'-deoxyribonucleoside 5'-triphosphate + ADP. It carries out the reaction a ribonucleoside 5'-diphosphate + ATP = a ribonucleoside 5'-triphosphate + ADP. In terms of biological role, major role in the synthesis of nucleoside triphosphates other than ATP. The ATP gamma phosphate is transferred to the NDP beta phosphate via a ping-pong mechanism, using a phosphorylated active-site intermediate. This chain is Nucleoside diphosphate kinase, found in Rhodopseudomonas palustris (strain BisB5).